Here is a 284-residue protein sequence, read N- to C-terminus: tRNA-cytidine(32) 2-sulfurtransferase (284 aa).

The short motif at 44–49 is the PP-loop motif element; it reads SGGKDS. Cys119, Cys122, and Cys210 together coordinate [4Fe-4S] cluster.

It belongs to the TtcA family. As to quaternary structure, homodimer. The cofactor is Mg(2+). Requires [4Fe-4S] cluster as cofactor.

The protein resides in the cytoplasm. It catalyses the reaction cytidine(32) in tRNA + S-sulfanyl-L-cysteinyl-[cysteine desulfurase] + AH2 + ATP = 2-thiocytidine(32) in tRNA + L-cysteinyl-[cysteine desulfurase] + A + AMP + diphosphate + H(+). It participates in tRNA modification. Its function is as follows. Catalyzes the ATP-dependent 2-thiolation of cytidine in position 32 of tRNA, to form 2-thiocytidine (s(2)C32). The sulfur atoms are provided by the cysteine/cysteine desulfurase (IscS) system. This chain is tRNA-cytidine(32) 2-sulfurtransferase, found in Chromohalobacter salexigens (strain ATCC BAA-138 / DSM 3043 / CIP 106854 / NCIMB 13768 / 1H11).